Reading from the N-terminus, the 457-residue chain is MEREMLSKTHIMFIPFPAQGHMSPMMQFAKRLAWKGLRITIVLPAQIRDFMQITNPLINTECISFDFDKDDGMPYSMQAYMGVVKLKVTNKLSDLLEKQRTNGYPVNLLVVDSLYPSRVEMCHQLGVKGAPFFTHSCAVGAIYYNARLGKLKIPPEEGLTSVSLPSIPLLGRDDLPIIRTGTFPDLFEHLGNQFSDLDKADWIFFNTFDKLENEEAKWLSSQWPITSIGPLIPSMYLDKQLPNDKDNGINFYKADVGSCIKWLDAKDPGSVVYASFGSVKHNLGDDYMDEVAWGLLHSKYHFIWVVIESERTKLSSDFLAEAEAEEKGLIVSWCPQLQVLSHKSIGSFMTHCGWNSTVEALSLGVPMVALPQQFDQPANAKYIVDVWQIGVRVPIGEEGVVLRGEVANCIKDVMEGEIGDELRGNALKWKGLAVEAMEKGGSSDKNIDEFISKLVSS.

Catalysis depends on H21, which acts as the Proton acceptor. H21 contributes to the an anthocyanidin binding site. The active-site Charge relay is D112. UDP-alpha-D-glucose-binding residues include T134, Q336, H351, W354, N355, S356, E359, D375, and Q376.

The protein belongs to the UDP-glycosyltransferase family.

The enzyme catalyses (20S)-protopanaxadiol + UDP-alpha-D-glucose = (20S)-ginsenoside Rh2 + UDP + H(+). Its pathway is secondary metabolite biosynthesis; terpenoid biosynthesis. Component of the triterpene saponins (e.g. PPD-type ginsenosides) biosynthetic pathway. Glycosyltransferase that catalyzes the biosynthesis of ginsenoside Rh2 from protopanaxadiol (PPD). The chain is UDP-glucosyltransferase 45 from Panax ginseng (Korean ginseng).